We begin with the raw amino-acid sequence, 372 residues long: Queuine tRNA-ribosyltransferase (372 aa).

The active-site Proton acceptor is the Asp-92. Substrate-binding positions include 92–96 (DSGGY), Asp-146, Gln-188, and Gly-215. The tract at residues 246-252 (GIGTIRE) is RNA binding. Asp-265 (nucleophile) is an active-site residue. Residues 270–274 (TRLGR) form an RNA binding; important for wobble base 34 recognition region. Cys-303, Cys-305, Cys-308, and His-334 together coordinate Zn(2+).

Belongs to the queuine tRNA-ribosyltransferase family. Homodimer. Within each dimer, one monomer is responsible for RNA recognition and catalysis, while the other monomer binds to the replacement base PreQ1. Requires Zn(2+) as cofactor.

It carries out the reaction 7-aminomethyl-7-carbaguanine + guanosine(34) in tRNA = 7-aminomethyl-7-carbaguanosine(34) in tRNA + guanine. The protein operates within tRNA modification; tRNA-queuosine biosynthesis. Catalyzes the base-exchange of a guanine (G) residue with the queuine precursor 7-aminomethyl-7-deazaguanine (PreQ1) at position 34 (anticodon wobble position) in tRNAs with GU(N) anticodons (tRNA-Asp, -Asn, -His and -Tyr). Catalysis occurs through a double-displacement mechanism. The nucleophile active site attacks the C1' of nucleotide 34 to detach the guanine base from the RNA, forming a covalent enzyme-RNA intermediate. The proton acceptor active site deprotonates the incoming PreQ1, allowing a nucleophilic attack on the C1' of the ribose to form the product. After dissociation, two additional enzymatic reactions on the tRNA convert PreQ1 to queuine (Q), resulting in the hypermodified nucleoside queuosine (7-(((4,5-cis-dihydroxy-2-cyclopenten-1-yl)amino)methyl)-7-deazaguanosine). This is Queuine tRNA-ribosyltransferase from Prochlorococcus marinus (strain SARG / CCMP1375 / SS120).